Reading from the N-terminus, the 116-residue chain is Large ribosomal subunit protein bL17 (116 aa).

It belongs to the bacterial ribosomal protein bL17 family. In terms of assembly, part of the 50S ribosomal subunit. Contacts protein L32.

This chain is Large ribosomal subunit protein bL17, found in Prochlorococcus marinus (strain MIT 9215).